The sequence spans 90 residues: Evasin P458 (90 aa).

The signal sequence occupies residues 1–24; the sequence is MEVKTFAFLQIAVLIAFSLHSASA. 3 cysteine pairs are disulfide-bonded: cysteine 44–cysteine 63, cysteine 48–cysteine 65, and cysteine 59–cysteine 76. N-linked (GlcNAc...) asparagine glycosylation is present at asparagine 47.

It is found in the secreted. In terms of biological role, salivary chemokine-binding protein which binds to host chemokines CXCL1, CXCL2, CXCL3, CXCL5, CXCL6 and CXCL13. The protein is Evasin P458 of Ixodes ricinus (Common tick).